Consider the following 444-residue polypeptide: ATP-dependent RNA helicase sub2 (444 aa).

Residues 59–87 carry the Q motif motif; it reads TGFREFLLKPELLRAISWCGFEHPSEVQQ. One can recognise a Helicase ATP-binding domain in the interval 90 to 265; it reads IPQAILGTDV…KKFMQNPLEI (176 aa). Residue 103–110 coordinates ATP; it reads AKSGLGKT. Positions 212-215 match the DECD box motif; the sequence is DECD. One can recognise a Helicase C-terminal domain in the interval 277 to 438; sequence GLQQYYIKLE…EYPEGGVDSA (162 aa).

The protein belongs to the DEAD box helicase family. DECD subfamily.

Its subcellular location is the nucleus. It carries out the reaction ATP + H2O = ADP + phosphate + H(+). ATP-binding RNA helicase involved in transcription elongation and required for the export of mRNA out of the nucleus. SUB2 also plays a role in pre-mRNA splicing and spliceosome assembly. May be involved in rDNA and telomeric silencing, and maintenance of genome integrity. The polypeptide is ATP-dependent RNA helicase sub2 (sub2) (Sclerotinia sclerotiorum (strain ATCC 18683 / 1980 / Ss-1) (White mold)).